A 402-amino-acid polypeptide reads, in one-letter code: uncharacterized protein (402 aa).

The signal sequence occupies residues Met-1 to Gly-44. The segment at Asn-53–Asn-79 is disordered.

Belongs to the bacterial solute-binding protein 1 family. WtpA subfamily.

This is an uncharacterized protein from Saccharolobus solfataricus (strain ATCC 35092 / DSM 1617 / JCM 11322 / P2) (Sulfolobus solfataricus).